Consider the following 213-residue polypeptide: Large ribosomal subunit protein uL3 (213 aa).

Residues 122–147 are disordered; the sequence is AIKRHGQSRGPMAHGSRYHRRPGSMG.

It belongs to the universal ribosomal protein uL3 family. In terms of assembly, part of the 50S ribosomal subunit. Forms a cluster with proteins L14 and L19.

Functionally, one of the primary rRNA binding proteins, it binds directly near the 3'-end of the 23S rRNA, where it nucleates assembly of the 50S subunit. This is Large ribosomal subunit protein uL3 from Geobacillus stearothermophilus (Bacillus stearothermophilus).